We begin with the raw amino-acid sequence, 600 residues long: Keratin, type II cuticular Hb4 (600 aa).

Residues 1–165 form a head region; sequence MSCRSYRVSS…PNAQRVKKDE (165 aa). An IF rod domain is found at 165–476; it reads EKEQIKTLNN…RLLEGEESRL (312 aa). A coil 1A region spans residues 166 to 200; it reads KEQIKTLNNKFASFIDKVRFLEQQNKLLETKWSFL. The tract at residues 201-210 is linker 1; the sequence is QEQKCIRSNL. The interval 211–311 is coil 1B; that stretch reads EPLFESYITN…YMEEIQLLQS (101 aa). A linker 12 region spans residues 312 to 328; sequence HISETSVIVKMDNSRDL. Residues 329 to 472 form a coil 2 region; that stretch reads NLDGIIAEVK…ATYRRLLEGE (144 aa). The interval 473–600 is tail; the sequence is ESRLCEGVGP…STTTSCRTKY (128 aa).

This sequence belongs to the intermediate filament family. In terms of assembly, heterotetramer of two type I and two type II keratins. Expressed in the hair follicles.

This Homo sapiens (Human) protein is Keratin, type II cuticular Hb4 (KRT84).